Consider the following 210-residue polypeptide: MKFGSAVILAGGKSRRMGFDKQFLQVKNHYLLCHHGEQLAALFDKIIVVSNTPELYRETPFVVVSDEIRDKGPLGGIHIGLKTAVSDYVYFLACDMPNINLDYIRYMRQCLESSPARACITRFGDWIEPFNAFYSRDLVAAIEDYLGAGHHSLFRFLKSLATHYVSEQQARHFSPDWRMFLNLNTREDFEKWRRQGPGLGFHAPSCAASR.

GTP is bound by residues 9–11 (LAG), Lys21, Asp66, and Asp95. Asp95 lines the Mg(2+) pocket.

This sequence belongs to the MobA family. Monomer. Mg(2+) is required as a cofactor.

It is found in the cytoplasm. It catalyses the reaction Mo-molybdopterin + GTP + H(+) = Mo-molybdopterin guanine dinucleotide + diphosphate. Transfers a GMP moiety from GTP to Mo-molybdopterin (Mo-MPT) cofactor (Moco or molybdenum cofactor) to form Mo-molybdopterin guanine dinucleotide (Mo-MGD) cofactor. This Syntrophotalea carbinolica (strain DSM 2380 / NBRC 103641 / GraBd1) (Pelobacter carbinolicus) protein is Molybdenum cofactor guanylyltransferase.